The primary structure comprises 75 residues: Large ribosomal subunit protein bL31c (75 aa).

It belongs to the bacterial ribosomal protein bL31 family. Type A subfamily. As to quaternary structure, part of the 50S ribosomal subunit.

Its subcellular location is the plastid. The protein localises to the chloroplast. Binds the 23S rRNA. The sequence is that of Large ribosomal subunit protein bL31c from Cyanidium caldarium (Red alga).